Reading from the N-terminus, the 358-residue chain is Peptide chain release factor 1 (358 aa).

Gln234 carries the post-translational modification N5-methylglutamine.

This sequence belongs to the prokaryotic/mitochondrial release factor family. Post-translationally, methylated by PrmC. Methylation increases the termination efficiency of RF1.

It localises to the cytoplasm. Its function is as follows. Peptide chain release factor 1 directs the termination of translation in response to the peptide chain termination codons UAG and UAA. The chain is Peptide chain release factor 1 from Akkermansia muciniphila (strain ATCC BAA-835 / DSM 22959 / JCM 33894 / BCRC 81048 / CCUG 64013 / CIP 107961 / Muc).